The chain runs to 461 residues: Cysteine--tRNA ligase (461 aa).

Cys-28 lines the Zn(2+) pocket. The 'HIGH' region motif lies at 30-40 (ITVYDLCHIGH). 3 residues coordinate Zn(2+): Cys-209, His-234, and Glu-238. Residues 266-270 (KMSKS) carry the 'KMSKS' region motif. Lys-269 provides a ligand contact to ATP.

The protein belongs to the class-I aminoacyl-tRNA synthetase family. As to quaternary structure, monomer. Zn(2+) is required as a cofactor.

It localises to the cytoplasm. It carries out the reaction tRNA(Cys) + L-cysteine + ATP = L-cysteinyl-tRNA(Cys) + AMP + diphosphate. This chain is Cysteine--tRNA ligase, found in Shigella boydii serotype 18 (strain CDC 3083-94 / BS512).